Here is a 317-residue protein sequence, read N- to C-terminus: MIDRYGRPLEDLRVTLTHVCNFSCFFCHMEGEDTESMQGLSPHQIGLVSRVAVEFGVKSVKLTGGEPTLRRDLPEIIREIRTSGVRDISMTTNGFLLANIAGKLKDAGLDRINISLHALTREKFKDVTGVDGMDRVIAGIREAKNQGFKPIKLNFVLTKRNSEEAKRVIEFSEEIGIDELHLIELHPVGLGRSTFSFHQGMEELEKEIAKIAVKSEIREKHFRPRYTLPSGLVVEIVKPYANPIFCAGCNRVRLTVDGKLKTCLYRDDKVIDVMYALSNKDLTLEERLELIRHGFEAAISIREPNFKYMMKIEAQQA.

Positions 4–223 constitute a Radical SAM core domain; the sequence is RYGRPLEDLR…KSEIREKHFR (220 aa). Arginine 13 contributes to the GTP binding site. [4Fe-4S] cluster is bound by residues cysteine 20, cysteine 24, and cysteine 27. Lysine 61 contacts GTP. Glycine 65 lines the S-adenosyl-L-methionine pocket. Threonine 91 serves as a coordination point for GTP. Serine 115 is a binding site for S-adenosyl-L-methionine. Lysine 152 contacts GTP. [4Fe-4S] cluster is bound by residues cysteine 246 and cysteine 249. 251–253 lines the GTP pocket; that stretch reads RVR. [4Fe-4S] cluster is bound at residue cysteine 263.

The protein belongs to the radical SAM superfamily. MoaA family. [4Fe-4S] cluster is required as a cofactor.

The catalysed reaction is GTP + AH2 + S-adenosyl-L-methionine = (8S)-3',8-cyclo-7,8-dihydroguanosine 5'-triphosphate + 5'-deoxyadenosine + L-methionine + A + H(+). It participates in cofactor biosynthesis; molybdopterin biosynthesis. Catalyzes the cyclization of GTP to (8S)-3',8-cyclo-7,8-dihydroguanosine 5'-triphosphate. In Metallosphaera sedula (strain ATCC 51363 / DSM 5348 / JCM 9185 / NBRC 15509 / TH2), this protein is Probable GTP 3',8-cyclase.